A 650-amino-acid polypeptide reads, in one-letter code: Epithelial sodium channel subunit beta (650 aa).

At 1-95 (MLLHINPAYL…IICEGPKKKA (95 aa)) the chain is on the cytoplasmic side. Residues 96–116 (MWFLLTLLFTALVCWQWGIFI) form a helical membrane-spanning segment. Residues 117 to 542 (RTYLSWEVSV…GGQFGFWMGG (426 aa)) are Extracellular-facing. 5 cysteine pairs are disulfide-bonded: cysteine 143/cysteine 317, cysteine 229/cysteine 234, cysteine 241/cysteine 248, cysteine 294/cysteine 301, and cysteine 406/cysteine 458. Residue asparagine 244 is glycosylated (N-linked (GlcNAc...) asparagine). A glycan (N-linked (GlcNAc...) asparagine) is linked at asparagine 305. The chain crosses the membrane as a helical span at residues 543 to 563 (SVLCLIEFGEIIIDFVWITII). At 564–650 (KLVALAKSLR…IESDSEGDAI (87 aa)) the chain is on the cytoplasmic side. The tract at residues 600 to 650 (FQPDTAPRSPNTGPYPNEQALPIPGTPPPNYDSLRLQPLDVIESDSEGDAI) is disordered. The PY motif; recruits WW domain-containing proteins and is thereby required for ubiquitination and inhibition of the channel by NEDD4 and NEDD4L signature appears at 626 to 630 (PPPNY). The segment covering 641 to 650 (IESDSEGDAI) has biased composition (acidic residues). Residues serine 643 and serine 645 each carry the phosphoserine modification.

It belongs to the amiloride-sensitive sodium channel (TC 1.A.6) family. SCNN1B subfamily. As to quaternary structure, component of the heterotrimeric epithelial sodium channel (ENaC) composed of an alpha/SCNN1A, a beta/SCNN1B and a gamma/SCNN1G subunit. An additional delta/SCNN1D subunit can replace the alpha/SCNN1A subunit to form an alternative channel with specific properties. Interacts with WWP1 (via WW domains). Interacts with WWP2 (via WW domains); inhibits the channel. Interacts with the full-length immature form of PCSK9 (pro-PCSK9). Interacts (N-glycosylated) with BPIFA1; the interaction is direct and inhibits the proteolytic processing of SCNN1A and SCNN1G and the activation of ENaC. Post-translationally, ubiquitinated. Can be ubiquitinated at multiple sites and undergo monoubiquitination and polyubiquitination. Ubiquitination by NEDD4 or NEDD4L inhibits the ENaC channel through endocytosis, intracellular retention and degradation of its individual subunits. However, some studies could not confirm the ubiquitination of this subunit of the ENaC. Phosphorylated on serine and threonine residues. Aldosterone and insulin increase the basal level of phosphorylation. In terms of processing, N-glycosylated. N-glycosylation is required for interaction with BPIFA1.

Its subcellular location is the apical cell membrane. It localises to the cytoplasmic vesicle membrane. It catalyses the reaction Na(+)(in) = Na(+)(out). With respect to regulation, originally identified and characterized by its inhibition by the diuretic drug amiloride. In terms of biological role, this is one of the three pore-forming subunits of the heterotrimeric epithelial sodium channel (ENaC), a critical regulator of sodium balance and fluid homeostasis. ENaC operates in epithelial tissues, where it mediates the electrodiffusion of sodium ions from extracellular fluid through the apical membrane of cells, with water following osmotically. It plays a key role in maintaining sodium homeostasis through electrogenic sodium reabsorption in the kidneys. Additionally, ENaC is essential for airway surface liquid homeostasis, which is crucial for proper mucus clearance. This Pan troglodytes (Chimpanzee) protein is Epithelial sodium channel subunit beta.